Here is a 125-residue protein sequence, read N- to C-terminus: MSKINEIIEAVKGLTVLELAELVKAFEEEFGVSAAAPVAMAAMPVAAAAAAPAEEQTEFDVILKAAGDKKVNVIKVVREITGLGLKEAKDLVDGAPKPVKEKVSKEEAESIKKKLEESGATVEVK.

The protein belongs to the bacterial ribosomal protein bL12 family. Homodimer. Part of the ribosomal stalk of the 50S ribosomal subunit. Forms a multimeric L10(L12)X complex, where L10 forms an elongated spine to which 2 to 4 L12 dimers bind in a sequential fashion. Binds GTP-bound translation factors.

Its function is as follows. Forms part of the ribosomal stalk which helps the ribosome interact with GTP-bound translation factors. Is thus essential for accurate translation. This Heliobacterium modesticaldum (strain ATCC 51547 / Ice1) protein is Large ribosomal subunit protein bL12.